Consider the following 279-residue polypeptide: Apolipoprotein L domain-containing protein 1 (279 aa).

3 helical membrane-spanning segments follow: residues 83-105 (SLVA…IVGL), 122-142 (GLGV…SLIF), and 192-212 (IALY…FLIP). Positions 226–253 (LKAKIQKLAESLESCTGALDELSEQLES) form a coiled coil.

This sequence belongs to the apolipoprotein L family. In terms of tissue distribution, expressed in neonatal dermal microvascular endothelial cells.

The protein resides in the cell membrane. It localises to the cell junction. Its subcellular location is the cytoplasmic vesicle. It is found in the secretory vesicle. Is a modulator of endothelial barrier permeability, required for proper organization of endothelial cell-cell junctions and cytoskeleton. It also plays a role in the modulation of secretory autophagy. May affect blood-brain barrier permeability. This Homo sapiens (Human) protein is Apolipoprotein L domain-containing protein 1 (APOLD1).